A 462-amino-acid chain; its full sequence is Hemopexin (462 aa).

Positions 1–23 (MARVLGAPVALGLWSLCWSLAIA) are cleaved as a signal peptide. 2 O-linked (GalNAc...) threonine glycosylation sites follow: T24 and T29. Residues 29-48 (TSAHGNVAEGETKPDPDVTE) form a disordered region. The segment at 30–40 (SAHGNVAEGET) is O-glycosylated at one site. Residues 38–48 (GETKPDPDVTE) show a composition bias toward basic and acidic residues. Cystine bridges form between C50–C231, C149–C154, and C188–C200. Hemopexin repeat units follow at residues 53-93 (GWSF…WKNF), 94-139 (PSPV…FPGI), 140-184 (PSPL…SWPA), and 185-231 (VGNC…FMPC). An N-linked (GlcNAc...) (complex) asparagine glycan is attached at N64. H79 serves as a coordination point for heme. A heme-binding site is contributed by H150. N-linked (GlcNAc...) (complex) asparagine glycosylation is present at N187. H236 contributes to the heme binding site. 2 N-linked (GlcNAc...) asparagine glycosylation sites follow: N240 and N246. 3 disulfides stabilise this stretch: C257–C460, C366–C408, and C418–C435. 4 Hemopexin repeats span residues 259–304 (PHLV…WPQG), 305–352 (PSAV…VGTP), 357–396 (LDSV…WTEL), and 400–450 (HEKV…ALPQ). Position 293 (H293) interacts with heme. N453 carries an N-linked (GlcNAc...) (complex) asparagine glycan.

This sequence belongs to the hemopexin family. As to quaternary structure, interacts with FLVCR1. In terms of assembly, (Microbial infection) Interacts with hepatitis E virus/HEV protein ORF3. N- and O-glycosylated. O-glycosylated with core 1 or possibly core 8 glycans. O-glycosylation in the 30-40 region is minor compared to glycosylation at Thr-24 and Thr-29. As to expression, expressed by the liver and secreted in plasma.

It localises to the secreted. Functionally, binds heme and transports it to the liver for breakdown and iron recovery, after which the free hemopexin returns to the circulation. The sequence is that of Hemopexin (HPX) from Homo sapiens (Human).